Consider the following 253-residue polypeptide: DNA repair protein RecO (253 aa).

The protein belongs to the RecO family.

Involved in DNA repair and RecF pathway recombination. The sequence is that of DNA repair protein RecO from Dehalococcoides mccartyi (strain ATCC BAA-2100 / JCM 16839 / KCTC 5957 / BAV1).